Consider the following 160-residue polypeptide: S-adenosylmethionine decarboxylase proenzyme (160 aa).

The active-site Schiff-base intermediate with substrate; via pyruvic acid is the Ser-73. Ser-73 bears the Pyruvic acid (Ser); by autocatalysis mark. His-78 (proton acceptor; for processing activity) is an active-site residue. The active-site Proton donor; for catalytic activity is the Cys-93.

This sequence belongs to the prokaryotic AdoMetDC family. Type 1 subfamily. In terms of assembly, heterotetramer of two alpha and two beta chains arranged as a dimer of alpha/beta heterodimers. Pyruvate is required as a cofactor. Post-translationally, is synthesized initially as an inactive proenzyme. Formation of the active enzyme involves a self-maturation process in which the active site pyruvoyl group is generated from an internal serine residue via an autocatalytic post-translational modification. Two non-identical subunits are generated from the proenzyme in this reaction, and the pyruvate is formed at the N-terminus of the alpha chain, which is derived from the carboxyl end of the proenzyme. The post-translation cleavage follows an unusual pathway, termed non-hydrolytic serinolysis, in which the side chain hydroxyl group of the serine supplies its oxygen atom to form the C-terminus of the beta chain, while the remainder of the serine residue undergoes an oxidative deamination to produce ammonia and the pyruvoyl group blocking the N-terminus of the alpha chain.

It carries out the reaction S-adenosyl-L-methionine + H(+) = S-adenosyl 3-(methylsulfanyl)propylamine + CO2. Its pathway is amine and polyamine biosynthesis; S-adenosylmethioninamine biosynthesis; S-adenosylmethioninamine from S-adenosyl-L-methionine: step 1/1. Functionally, catalyzes the decarboxylation of S-adenosylmethionine to S-adenosylmethioninamine (dcAdoMet), the propylamine donor required for the synthesis of the polyamines spermine and spermidine from the diamine putrescine. The protein is S-adenosylmethionine decarboxylase proenzyme of Pseudomonas paraeruginosa (strain DSM 24068 / PA7) (Pseudomonas aeruginosa (strain PA7)).